A 360-amino-acid chain; its full sequence is F-box protein SKP2A (360 aa).

The 47-residue stretch at 25–71 folds into the F-box domain; it reads IKEWKDIPVELLMRILSLVDDRNVIVASGVCTGWRDAISFGLTRLRL. Residues 127–128, 149–152, 175–178, and asparagine 202 each bind (indol-3-yl)acetate; these read SL, NLSG, and NLCG.

In terms of assembly, part of a SCF (ASK-cullin-F-box) protein ligase complex. Interacts with CUL1 (RUB1-modified and non-modified isoforms), SKP1A, SKP1B and ASK18. Recruit DPB and phosphorylated E2FC. Interacts with auxin. Auxin controls the interaction with DPB. Post-translationally, polyubiquitinated and subsequently targeted to proteasome. Auxin promotes this ubiquitination-mediated degradation. In terms of tissue distribution, expressed in embryo, seedlings, hypocotyl, roots, leaves and flowers.

It is found in the nucleus. The protein operates within protein modification; protein ubiquitination. Component of SCF(SKP2A) E3 ubiquitin ligase complexes, which mediate the ubiquitination and subsequent proteasomal degradation of target proteins (including cell cycle repressors). Acts as an auxin receptor; one active auxin is indole-3-acetate. Regulates the stability of the transcription factors E2FC and DPB, repressors of cell proliferation. Confers increase tolerance to osmotic stress by promoting cell division, especially in meristems. Promotes the formation of lateral root primordia. This chain is F-box protein SKP2A (SKP2A), found in Arabidopsis thaliana (Mouse-ear cress).